We begin with the raw amino-acid sequence, 333 residues long: MNMPIEVLMPIILLALALILISVVFTFIPVGLWISALAAGVNVGIFTLVGMRLRRVTPSRIVNPLIKAHKAGLRVTTAQLEAHYLAGGNVDRVVNALIAAERAAIPLQFERAAAIDLAGRDVLEAVQMSVNPKVIETPVVSAVAKNGIELRVKARVTVRANIDRLVGGAGEETIIARVGEGIVTSIGSSLSHEKVLENPDMVSRTVLAKGLDSGTAFEILSIDIADVDVGKNIGAQLQTDQAEADKRIAQAKAEERRAMAVAKEQEMIAYVQEMRAKVVEAESEVPRALAEALKEGKLGVMDYYTMQNIMADTSMRDNIARSSNSNTDSNPKK.

A run of 2 helical transmembrane segments spans residues 8–28 (LMPI…FTFI) and 30–50 (VGLW…TLVG).

Belongs to the flotillin-like FloA family. In terms of assembly, homooligomerizes.

It localises to the cell membrane. It is found in the membrane raft. In terms of biological role, found in functional membrane microdomains (FMM) that may be equivalent to eukaryotic membrane rafts. FMMs are highly dynamic and increase in number as cells age. Flotillins are thought to be important factors in membrane fluidity. The chain is Flotillin-like protein FloA from Desulfitobacterium hafniense (strain DSM 10664 / DCB-2).